Consider the following 593-residue polypeptide: Meiosis-specific APC/C activator protein AMA1 (593 aa).

Residues 1 to 11 (MATPHLYHRYN) show a composition bias toward basic residues. A disordered region spans residues 1–26 (MATPHLYHRYNSKSSNKNINSSGNST). Positions 12-25 (SKSSNKNINSSGNS) are enriched in low complexity. The short motif at 29 to 35 (DRFIPKS) is the C-box element. Residues 94-109 (SSISSSSESQVTRSGS) are compositionally biased toward low complexity. The disordered stretch occupies residues 94 to 125 (SSISSSSESQVTRSGSARASRNDYSKLTKEQK). Residues 113-125 (SRNDYSKLTKEQK) show a composition bias toward basic and acidic residues. WD repeat units follow at residues 226–264 (RNDFYSNLISWSRTTNNVLVGLGCSVYIWSEKEGAVSIL), 271–310 (EKRDLVTCVSFCPYNTYFIVGTKFGRILLYDQKEFFHSSN), 323–364 (ESFK…FPIK), 388–427 (AQAQQVCGISLNEHANLLAVGGNDNSCSLWDISDLDKPIK), 432–474 (PHKA…LLDE), and 525–564 (PNPLRVLSAVISPSSMAICVATNDETIRFYELWNDKEEII).

The protein belongs to the WD repeat CDC20/Fizzy family. In terms of assembly, interacts with CDC16.

Its function is as follows. Activator protein that regulates the ubiquitin ligase activity and substrate specificity of the anaphase promoting complex/cyclosome (APC/C). Required for the ubiquitination and subsequent degradation of the B-type cyclin CLB1 by the APC/C complex during meiosis. Required for meiosis I, late meiotic gene expression and spore wall assembly. This is Meiosis-specific APC/C activator protein AMA1 (AMA1) from Saccharomyces cerevisiae (strain ATCC 204508 / S288c) (Baker's yeast).